We begin with the raw amino-acid sequence, 184 residues long: Large ribosomal subunit protein uL6 (184 aa).

The protein belongs to the universal ribosomal protein uL6 family. As to quaternary structure, part of the 50S ribosomal subunit.

This protein binds to the 23S rRNA, and is important in its secondary structure. It is located near the subunit interface in the base of the L7/L12 stalk, and near the tRNA binding site of the peptidyltransferase center. This chain is Large ribosomal subunit protein uL6, found in Mycoplasma pneumoniae (strain ATCC 29342 / M129 / Subtype 1) (Mycoplasmoides pneumoniae).